The following is a 171-amino-acid chain: Shikimate kinase (171 aa).

14-19 (GAGKST) is a binding site for ATP. Serine 18 serves as a coordination point for Mg(2+). Substrate-binding residues include aspartate 36, arginine 60, and glycine 82. ATP is bound at residue arginine 120. Arginine 139 provides a ligand contact to substrate. An ATP-binding site is contributed by glutamine 156.

The protein belongs to the shikimate kinase family. As to quaternary structure, monomer. Mg(2+) serves as cofactor.

The protein resides in the cytoplasm. The catalysed reaction is shikimate + ATP = 3-phosphoshikimate + ADP + H(+). The protein operates within metabolic intermediate biosynthesis; chorismate biosynthesis; chorismate from D-erythrose 4-phosphate and phosphoenolpyruvate: step 5/7. Catalyzes the specific phosphorylation of the 3-hydroxyl group of shikimic acid using ATP as a cosubstrate. The polypeptide is Shikimate kinase (Pseudoalteromonas atlantica (strain T6c / ATCC BAA-1087)).